A 454-amino-acid polypeptide reads, in one-letter code: tRNA modification GTPase MnmE (454 aa).

(6S)-5-formyl-5,6,7,8-tetrahydrofolate contacts are provided by R23, E80, and K120. The 162-residue stretch at 216–377 folds into the TrmE-type G domain; it reads GMKVVIAGRP…LRNHLKQSMG (162 aa). A K(+)-binding site is contributed by N226. Residues 226–231, 245–251, 270–273, 335–338, and 358–360 contribute to the GTP site; these read NAGKSS, TDIAGTT, DTAG, NKAD, and SAR. S230 contributes to the Mg(2+) binding site. Residues T245, I247, and T250 each contribute to the K(+) site. T251 lines the Mg(2+) pocket. (6S)-5-formyl-5,6,7,8-tetrahydrofolate is bound at residue K454.

It belongs to the TRAFAC class TrmE-Era-EngA-EngB-Septin-like GTPase superfamily. TrmE GTPase family. In terms of assembly, homodimer. Heterotetramer of two MnmE and two MnmG subunits. K(+) is required as a cofactor.

Its subcellular location is the cytoplasm. Functionally, exhibits a very high intrinsic GTPase hydrolysis rate. Involved in the addition of a carboxymethylaminomethyl (cmnm) group at the wobble position (U34) of certain tRNAs, forming tRNA-cmnm(5)s(2)U34. This Salmonella choleraesuis (strain SC-B67) protein is tRNA modification GTPase MnmE.